The following is a 463-amino-acid chain: NADH-quinone oxidoreductase subunit N (463 aa).

The next 14 membrane-spanning stretches (helical) occupy residues 2–22 (NTLI…ILNF), 25–45 (GIVP…FYEF), 61–81 (FSTA…ALSH), 91–110 (ISDF…AMVS), 114–133 (LAMF…VLAA), 149–169 (FLMG…IYGA), 189–209 (IWFP…IAAV), 223–243 (PALT…ATLF), 264–284 (FTNV…IMAL), 292–312 (MLAF…LTIA), 317–337 (VLLY…SVIL), 362–382 (AAIL…SGFF), 395–415 (GYVA…GYYF), and 434–454 (PFLI…LGLF).

Belongs to the complex I subunit 2 family. As to quaternary structure, NDH-1 is composed of 14 different subunits. Subunits NuoA, H, J, K, L, M, N constitute the membrane sector of the complex.

The protein localises to the cell inner membrane. It catalyses the reaction a quinone + NADH + 5 H(+)(in) = a quinol + NAD(+) + 4 H(+)(out). Functionally, NDH-1 shuttles electrons from NADH, via FMN and iron-sulfur (Fe-S) centers, to quinones in the respiratory chain. The immediate electron acceptor for the enzyme in this species is believed to be a menaquinone. Couples the redox reaction to proton translocation (for every two electrons transferred, four hydrogen ions are translocated across the cytoplasmic membrane), and thus conserves the redox energy in a proton gradient. The chain is NADH-quinone oxidoreductase subunit N from Flavobacterium johnsoniae (strain ATCC 17061 / DSM 2064 / JCM 8514 / BCRC 14874 / CCUG 350202 / NBRC 14942 / NCIMB 11054 / UW101) (Cytophaga johnsonae).